The following is a 45-amino-acid chain: Iota-conotoxin-like R11.13 (45 aa).

Cystine bridges form between cysteine 5/cysteine 19, cysteine 12/cysteine 22, cysteine 18/cysteine 27, and cysteine 21/cysteine 36. Leucine 43 bears the D-leucine mark. A propeptide (removed by a carboxypeptidase) is located at residue arginine 45.

The protein belongs to the conotoxin I1 superfamily. As to expression, expressed by the venom duct.

Its subcellular location is the secreted. Functionally, iota-conotoxins bind to voltage-gated sodium channels (Nav) and act as agonists by shifting the voltage-dependence of activation to more hyperpolarized levels. Produces general excitatory symptoms. The polypeptide is Iota-conotoxin-like R11.13 (Conus radiatus (Rayed cone)).